We begin with the raw amino-acid sequence, 283 residues long: MNCNYNCVTLHNSVRMPQLGLGVWRAQDGAETANAVRWAIEAGYRHIDTAYIYSNERGVGQGIRESGVPREEVWVTTKVWNSDQGYEKTLAAFERSRELLGLEYIDLYLIHWPGKKKFVDTWKALEKLYEEKKVRAIGVSNFEPHHLTELFKSCKIRPMVNQVELHPLFQQRTLREFCKQHNIAITAWSPLGSGEEAGILKNHVLGEIAKKHNKSPAQVVIRWDIQHGIVTIPKSTNKGRIQENFNVWDFKLTEEEMRQIDELNEDKRIGGDPDNFFPGGEEA.

Residues 23 to 24 (VW) and Asp48 each bind NADP(+). Residue Tyr53 is the Proton donor of the active site. Residue His111 participates in substrate binding. NADP(+)-binding positions include 140–141 (SN), Gln162, 188–193 (WSPLGS), 234–236 (KST), and 240–244 (RIQEN). The tract at residues 264-283 (NEDKRIGGDPDNFFPGGEEA) is disordered.

Belongs to the aldo/keto reductase family. Monomer.

Its subcellular location is the cytoplasm. It carries out the reaction prostaglandin F2alpha + NADP(+) = prostaglandin H2 + NADPH + H(+). It participates in lipid metabolism; prostaglandin biosynthesis. In terms of biological role, catalyzes the NADP-dependent formation of prostaglandin F2-alpha from prostaglandin H2. Also has aldo/ketoreductase activity towards the synthetic substrates 9,10-phenanthrenequinone and p-nitrobenzaldehyde. The protein is 9,11-endoperoxide prostaglandin H2 reductase of Trypanosoma cruzi (strain CL Brener).